Here is a 439-residue protein sequence, read N- to C-terminus: Acetyl esterase Axe7A (439 aa).

A signal peptide spans 1–31 (MFNFAPKQTTEMKKLLFTLVFVLGSMATALA). Ser309 (nucleophile) is an active-site residue. Catalysis depends on charge relay system residues Asp391 and His420.

The protein belongs to the carbohydrate esterase 7 family.

It participates in glycan degradation; xylan degradation. Its function is as follows. Involved in degradation of plant cell wall polysaccharides. Has acetyl esterase activity towards a broad range of substrates including xylose-tetraacetate, 4-O-methylumbelliferyl acetate, glucose-pentaacetate, cephalosporin C, and acetylated xylo-oligosaccharides smaller than xylo-heptaose. Displays no detectable activity on polymeric acetylated xylan. The protein is Acetyl esterase Axe7A of Xylanibacter ruminicola (strain ATCC 19189 / DSM 19721 / CIP 105475 / JCM 8958 / 23) (Prevotella ruminicola).